A 430-amino-acid polypeptide reads, in one-letter code: Glutamine synthetase leaf isozyme, chloroplastic (430 aa).

The transit peptide at 1–49 directs the protein to the chloroplast; sequence MAQILAPSTQWQMRITKTSPCATPITSKMWSSLVMKQTKKVAHSAKFRV. One can recognise a GS beta-grasp domain in the interval 77–157; it reads IIAEYIWIGG…VVCDAYTPAG (81 aa). Positions 99–119 are disordered; sequence SKPVSHPSEVPKWNYDGSSTG. The 270-residue stretch at 161–430 folds into the GS catalytic domain; sequence PTNKRHRAAE…LAAQKIALKV (270 aa).

This sequence belongs to the glutamine synthetase family. As to quaternary structure, homooctamer.

The protein resides in the plastid. It localises to the chloroplast. The enzyme catalyses L-glutamate + NH4(+) + ATP = L-glutamine + ADP + phosphate + H(+). Functionally, the light-modulated chloroplast enzyme, encoded by a nuclear gene and expressed primarily in leaves, is responsible for the reassimilation of the ammonia generated by photorespiration. This is Glutamine synthetase leaf isozyme, chloroplastic (GS2) from Pisum sativum (Garden pea).